A 926-amino-acid polypeptide reads, in one-letter code: Alanine--tRNA ligase (926 aa).

Zn(2+)-binding residues include histidine 611, histidine 615, cysteine 714, and histidine 718.

It belongs to the class-II aminoacyl-tRNA synthetase family. It depends on Zn(2+) as a cofactor.

It is found in the cytoplasm. The enzyme catalyses tRNA(Ala) + L-alanine + ATP = L-alanyl-tRNA(Ala) + AMP + diphosphate. Catalyzes the attachment of alanine to tRNA(Ala) in a two-step reaction: alanine is first activated by ATP to form Ala-AMP and then transferred to the acceptor end of tRNA(Ala). Also edits incorrectly charged Ser-tRNA(Ala) and Gly-tRNA(Ala) via its editing domain. The chain is Alanine--tRNA ligase from Methanosarcina mazei (strain ATCC BAA-159 / DSM 3647 / Goe1 / Go1 / JCM 11833 / OCM 88) (Methanosarcina frisia).